We begin with the raw amino-acid sequence, 100 residues long: Small ribosomal subunit protein uS14c (100 aa).

This sequence belongs to the universal ribosomal protein uS14 family. In terms of assembly, part of the 30S ribosomal subunit.

The protein resides in the plastid. It is found in the chloroplast. Its function is as follows. Binds 16S rRNA, required for the assembly of 30S particles. The polypeptide is Small ribosomal subunit protein uS14c (Bigelowiella natans (Pedinomonas minutissima)).